Here is a 378-residue protein sequence, read N- to C-terminus: GDP-mannose 3,5-epimerase 1 (378 aa).

NAD(+) is bound by residues 36–62, D60, and D80; that span reads GAGG…SDWK. Residues G105 and 145-147 contribute to the substrate site; that span reads SAC. The NAD(+) site is built by Y175 and K179. Catalysis depends on Y175, which acts as the Proton acceptor. Substrate-binding positions include N204, 217-219, K226, 242-244, R307, and S357; these read EKA and QTR.

Belongs to the NAD(P)-dependent epimerase/dehydratase family. As to quaternary structure, homodimer. It depends on NAD(+) as a cofactor.

It catalyses the reaction GDP-alpha-D-mannose = GDP-beta-L-gulose. The catalysed reaction is GDP-beta-L-gulose = GDP-beta-L-galactose. It functions in the pathway cofactor biosynthesis; L-ascorbate biosynthesis via GDP-alpha-D-mannose pathway; L-ascorbate from GDP-alpha-D-mannose: step 1/5. Strongly activated by NAD. Activated by NADP. Slightly activated by NADH and NADPH. Inhibited by GDP. In terms of biological role, catalyzes a reversible epimerization of GDP-D-mannose that precedes the committed step in the biosynthesis of vitamin C (L-ascorbate), resulting in the hydrolysis of the highly energetic glycosyl-pyrophosphoryl linkage. Able to catalyze 2 distinct epimerization reactions and can release both GDP-L-galactose and GDP-L-gulose from GDP-mannose. This chain is GDP-mannose 3,5-epimerase 1 (GME-1), found in Oryza sativa subsp. japonica (Rice).